The chain runs to 191 residues: Chromobox protein homolog 5 (191 aa).

Phosphoserine occurs at positions 11, 12, 13, and 14. The Chromo 1 domain maps to 20–78; it reads YVVEKVLDRRVVKGQVEYLLKWKGFSEEHNTWEPEKNLDCPELISEFMKKYKKMKEGEN. Lysine 32 is covalently cross-linked (Glycyl lysine isopeptide (Lys-Gly) (interchain with G-Cter in SUMO2)). Lysine 40 carries the N6-acetyllysine modification. The tract at residues 70 to 117 is disordered; the sequence is YKKMKEGENNKPREKSESNKRKSNFSNSADDIKSKKKREQSNDIARGF. Basic and acidic residues predominate over residues 73 to 89; sequence MKEGENNKPREKSESNK. Lysine 91 participates in a covalent cross-link: Glycyl lysine isopeptide (Lys-Gly) (interchain with G-Cter in SUMO2). Residues serine 92, serine 95, and serine 97 each carry the phosphoserine modification. Residues lysine 102, lysine 106, lysine 154, and lysine 184 each participate in a glycyl lysine isopeptide (Lys-Gly) (interchain with G-Cter in SUMO2) cross-link. Residues 121–179 form the Chromo 2; shadow subtype domain; sequence LEPEKIIGATDSCGDLMFLMKWKDTDEADLVLAKEANVKCPQIVIAFYEERLTWHAYPE.

In terms of assembly, homodimer. Interacts with histone H3 methylated at 'Lys-9'. Interacts (via Chromo 2; shadow subtype domain) with the MIS12 complex subunit NSL1; the interaction is direct, involves dimeric CBX5, and occurs during interphase. Interacts with POGZ; POGZ and PXVXL motif-containing proteins such as INCENP and TRIM28 compete for interaction with CBX5. Interacts with LRIF1 (via PxVxL motif). Interacts with INCENP. Interacts with TRIM24. Interacts (via the chromoshadow domain) with ATRX; the interaction is direct. Interacts (via the chromoshadow domain) with CHAF1A; the interaction is direct. Interacts (via the chromoshadow domain) with LBR; the interaction is direct. Interacts (via the chromoshadow domain) with NIPBL; the interaction is direct. Interacts (via the chromoshadow domain) with SP100; the interaction is direct. Interacts (via the chromoshadow domain) with STAM2; the interaction is direct. Interacts (via the chromoshadow domain) with TRIM28; the interaction is direct. Interacts (via the chromoshadow domain) with CBX3; the interaction is direct. Interacts with PRR14 (via N-terminus). Interacts with RRP1B. Interacts with HNRNPU (via C-terminus); this interaction is, at least in part, RNA-dependent. Interacts with ZNF263; recruited to the SIX3 promoter along with other proteins involved in chromatin modification and transcriptional corepression where it contributes to transcriptional repression. Interacts with AURKB during mitosis. Interacts with CHAMP1. Interacts with BAHD1. Interacts with HP1BP3. Interacts with CHD3. Interacts with CHD4. Interacts with SMYD5. Interacts with KMT5B. Interacts with KMT5C. As to quaternary structure, (Microbial infection) Interacts with JC virus agnoprotein; this interaction induces the dissociation of CBX5 from LBR, resulting in destabilization of the nuclear envelope. In terms of processing, phosphorylation of HP1 and LBR may be responsible for some of the alterations in chromatin organization and nuclear structure which occur at various times during the cell cycle. Phosphorylated during interphase and possibly hyper-phosphorylated during mitosis. Ubiquitinated.

The protein localises to the nucleus. Its subcellular location is the chromosome. It is found in the centromere. Functionally, component of heterochromatin that recognizes and binds histone H3 tails methylated at 'Lys-9' (H3K9me), leading to epigenetic repression. In contrast, it is excluded from chromatin when 'Tyr-41' of histone H3 is phosphorylated (H3Y41ph). May contribute to the association of heterochromatin with the inner nuclear membrane by interactions with the lamin-B receptor (LBR). Involved in the formation of kinetochore through interaction with the MIS12 complex subunit NSL1. Required for the formation of the inner centromere. This is Chromobox protein homolog 5 (CBX5) from Homo sapiens (Human).